We begin with the raw amino-acid sequence, 395 residues long: Probable L-tyrosine/L-aspartate decarboxylase (395 aa).

Lys-242 is subject to N6-(pyridoxal phosphate)lysine.

This sequence belongs to the group II decarboxylase family. MfnA subfamily. It depends on pyridoxal 5'-phosphate as a cofactor.

It catalyses the reaction L-tyrosine + H(+) = tyramine + CO2. The catalysed reaction is L-aspartate + H(+) = beta-alanine + CO2. Its pathway is cofactor biosynthesis; methanofuran biosynthesis. It functions in the pathway cofactor biosynthesis; coenzyme A biosynthesis. Catalyzes the decarboxylation of L-tyrosine to produce tyramine for methanofuran biosynthesis. Can also catalyze the decarboxylation of L-aspartate to produce beta-alanine for coenzyme A (CoA) biosynthesis. This Methanosarcina acetivorans (strain ATCC 35395 / DSM 2834 / JCM 12185 / C2A) protein is Probable L-tyrosine/L-aspartate decarboxylase.